Here is a 1001-residue protein sequence, read N- to C-terminus: Serine/threonine-protein kinase TAO1 (1001 aa).

Position 9 is a phosphoserine (Ser-9). A Protein kinase domain is found at 28 to 281 (FTDLREIGHG…SEELLKHMFV (254 aa)). Residues 34-42 (IGHGSFGAV) and Lys-57 contribute to the ATP site. Asp-151 acts as the Proton acceptor in catalysis. 2 disordered regions span residues 324–380 (PAVE…DKSE) and 404–433 (ENYQ…SHYR). Residues 350-370 (SNQSIPSMSISASSQSSSVNS) are compositionally biased toward low complexity. Ser-421 and Ser-445 each carry phosphoserine. The stretch at 458-651 (SELREQMSGY…QTQKDLEHAM (194 aa)) forms a coiled coil. A disordered region spans residues 567–587 (KEELNENQSTPKKEKQEWLSK). A compositionally biased stretch (basic and acidic residues) spans 577-587 (PKKEKQEWLSK). Thr-669 carries the post-translational modification Phosphothreonine. Residues 754–877 (KAVLKRLKEE…LERQAREIEA (124 aa)) adopt a coiled-coil conformation. A disordered region spans residues 905-1001 (PGASSWSHNP…ISNGSHMSYT (97 aa)). Residues 921-930 (HWGHPMGGTP) are compositionally biased toward low complexity. Ser-965 is modified (phosphoserine). A compositionally biased stretch (polar residues) spans 975–1001 (GGRTEQGMSRSTSVTSQISNGSHMSYT).

The protein belongs to the protein kinase superfamily. STE Ser/Thr protein kinase family. STE20 subfamily. In terms of assembly, self-associates. Interacts with MAP2K3. Interacts with SPRED1. Interacts with TESK1; the interaction inhibits TAOK1 kinase activity. Interacts with MAP3K7. Post-translationally, proteolytically processed by caspase-3 (CASP3). In terms of processing, autophosphorylated. Phosphorylated by ATM in response to DNA damage. Phosphorylated by LRRK2.

It localises to the cytoplasm. It carries out the reaction L-seryl-[protein] + ATP = O-phospho-L-seryl-[protein] + ADP + H(+). The enzyme catalyses L-threonyl-[protein] + ATP = O-phospho-L-threonyl-[protein] + ADP + H(+). Its activity is regulated as follows. Serine/threonine-protein kinase activity is inhibited by SPRED1. Functionally, serine/threonine-protein kinase involved in various processes such as p38/MAPK14 stress-activated MAPK cascade, DNA damage response and regulation of cytoskeleton stability. Phosphorylates MAP2K3, MAP2K6 and MARK2. Acts as an activator of the p38/MAPK14 stress-activated MAPK cascade by mediating phosphorylation and subsequent activation of the upstream MAP2K3 and MAP2K6 kinases. Involved in G-protein coupled receptor signaling to p38/MAPK14. In response to DNA damage, involved in the G2/M transition DNA damage checkpoint by activating the p38/MAPK14 stress-activated MAPK cascade, probably by mediating phosphorylation of MAP2K3 and MAP2K6. Acts as a regulator of cytoskeleton stability by phosphorylating 'Thr-208' of MARK2, leading to activate MARK2 kinase activity and subsequent phosphorylation and detachment of MAPT/TAU from microtubules. Also acts as a regulator of apoptosis: regulates apoptotic morphological changes, including cell contraction, membrane blebbing and apoptotic bodies formation via activation of the MAPK8/JNK cascade. During fetal development, it plays an essential role in the regulation of neuronal differentiation and migration to the cortical plate. The polypeptide is Serine/threonine-protein kinase TAO1 (Taok1) (Mus musculus (Mouse)).